Consider the following 156-residue polypeptide: Small ribosomal subunit protein uS7 (156 aa).

Belongs to the universal ribosomal protein uS7 family. As to quaternary structure, part of the 30S ribosomal subunit. Contacts proteins S9 and S11.

Functionally, one of the primary rRNA binding proteins, it binds directly to 16S rRNA where it nucleates assembly of the head domain of the 30S subunit. Is located at the subunit interface close to the decoding center, probably blocks exit of the E-site tRNA. This chain is Small ribosomal subunit protein uS7, found in Dechloromonas aromatica (strain RCB).